We begin with the raw amino-acid sequence, 337 residues long: Anthranilate phosphoribosyltransferase (337 aa).

Residues Gly81, 84–85, Thr89, 91–94, 109–117, and Thr121 each bind 5-phospho-alpha-D-ribose 1-diphosphate; these read GD, NIST, and KHGNRALSS. Gly81 serves as a coordination point for anthranilate. Ser93 is a Mg(2+) binding site. Asn112 contacts anthranilate. Arg167 contacts anthranilate. Positions 225 and 226 each coordinate Mg(2+).

It belongs to the anthranilate phosphoribosyltransferase family. As to quaternary structure, homodimer. Requires Mg(2+) as cofactor.

It carries out the reaction N-(5-phospho-beta-D-ribosyl)anthranilate + diphosphate = 5-phospho-alpha-D-ribose 1-diphosphate + anthranilate. The protein operates within amino-acid biosynthesis; L-tryptophan biosynthesis; L-tryptophan from chorismate: step 2/5. Functionally, catalyzes the transfer of the phosphoribosyl group of 5-phosphorylribose-1-pyrophosphate (PRPP) to anthranilate to yield N-(5'-phosphoribosyl)-anthranilate (PRA). This is Anthranilate phosphoribosyltransferase from Rhizobium meliloti (strain 1021) (Ensifer meliloti).